The sequence spans 290 residues: Nitrogenase iron protein 2 (290 aa).

Glycine 10–serine 17 lines the ATP pocket. A [4Fe-4S] cluster-binding site is contributed by cysteine 98. Arginine 101 is subject to ADP-ribosylarginine; by dinitrogenase reductase ADP-ribosyltransferase. Cysteine 133 provides a ligand contact to [4Fe-4S] cluster.

Belongs to the NifH/BchL/ChlL family. As to quaternary structure, homodimer. [4Fe-4S] cluster serves as cofactor. In terms of processing, the reversible ADP-ribosylation of Arg-101 inactivates the nitrogenase reductase and regulates nitrogenase activity.

It catalyses the reaction N2 + 8 reduced [2Fe-2S]-[ferredoxin] + 16 ATP + 16 H2O = H2 + 8 oxidized [2Fe-2S]-[ferredoxin] + 2 NH4(+) + 16 ADP + 16 phosphate + 6 H(+). Functionally, the key enzymatic reactions in nitrogen fixation are catalyzed by the nitrogenase complex, which has 2 components: the iron protein (component 2) and a component 1 which is either a molybdenum-iron protein, a vanadium-iron, or an iron-iron protein. The sequence is that of Nitrogenase iron protein 2 (vnfH) from Azotobacter vinelandii.